The primary structure comprises 547 residues: Glucose-6-phosphate isomerase (547 aa).

Residue Glu-352 is the Proton donor of the active site. Active-site residues include His-383 and Lys-511.

This sequence belongs to the GPI family.

It localises to the cytoplasm. It carries out the reaction alpha-D-glucose 6-phosphate = beta-D-fructose 6-phosphate. The protein operates within carbohydrate biosynthesis; gluconeogenesis. Its pathway is carbohydrate degradation; glycolysis; D-glyceraldehyde 3-phosphate and glycerone phosphate from D-glucose: step 2/4. Functionally, catalyzes the reversible isomerization of glucose-6-phosphate to fructose-6-phosphate. This Magnetococcus marinus (strain ATCC BAA-1437 / JCM 17883 / MC-1) protein is Glucose-6-phosphate isomerase.